A 510-amino-acid polypeptide reads, in one-letter code: ATP-dependent zinc metalloprotease FtsH 2 (510 aa).

The Cytoplasmic portion of the chain corresponds to 1–4 (MKKN). A helical membrane pass occupies residues 5-25 (LHIIILALSIFINLLFIYIFI). The Extracellular segment spans residues 26 to 31 (SEVKPN). Residues 32 to 52 (LNLNLSFILTAAVIVVTYLLF) form a helical membrane-spanning segment. Topologically, residues 53–510 (KNKFSELMPV…LWEEENTLCV (458 aa)) are cytoplasmic. 124–131 (GPPGTGKT) serves as a coordination point for ATP. H343 lines the Zn(2+) pocket. Residue E344 is part of the active site. Zn(2+) contacts are provided by H347 and D418.

It in the central section; belongs to the AAA ATPase family. This sequence in the C-terminal section; belongs to the peptidase M41 family. Homohexamer. Zn(2+) serves as cofactor.

It is found in the cell membrane. Functionally, acts as a processive, ATP-dependent zinc metallopeptidase for both cytoplasmic and membrane proteins. Plays a role in the quality control of integral membrane proteins. In Thermoanaerobacter sp. (strain X514), this protein is ATP-dependent zinc metalloprotease FtsH 2.